A 949-amino-acid chain; its full sequence is Bifunctional uridylyltransferase/uridylyl-removing enzyme (949 aa).

Residues 1 to 377 (MARHETSFPE…RFRNRVRKIP (377 aa)) form a uridylyltransferase region. Residues 378-733 (GTLDFVDDGG…VRTHDFHAIT (356 aa)) form a uridylyl-removing region. One can recognise an HD domain in the interval 494-610 (VDEHLLRAVD…VDFAERVQSL (117 aa)). ACT domains are found at residues 734-815 (EITV…DVIA) and 845-926 (VIEV…ERMP). Residues 925–949 (MPSGIIAPTPVPRASHGSKATKAET) are disordered.

Belongs to the GlnD family. Mg(2+) serves as cofactor.

It catalyses the reaction [protein-PII]-L-tyrosine + UTP = [protein-PII]-uridylyl-L-tyrosine + diphosphate. It carries out the reaction [protein-PII]-uridylyl-L-tyrosine + H2O = [protein-PII]-L-tyrosine + UMP + H(+). Its activity is regulated as follows. Uridylyltransferase (UTase) activity is inhibited by glutamine, while glutamine activates uridylyl-removing (UR) activity. Its function is as follows. Modifies, by uridylylation and deuridylylation, the PII regulatory proteins (GlnB and homologs), in response to the nitrogen status of the cell that GlnD senses through the glutamine level. Under low glutamine levels, catalyzes the conversion of the PII proteins and UTP to PII-UMP and PPi, while under higher glutamine levels, GlnD hydrolyzes PII-UMP to PII and UMP (deuridylylation). Thus, controls uridylylation state and activity of the PII proteins, and plays an important role in the regulation of nitrogen fixation and metabolism. The sequence is that of Bifunctional uridylyltransferase/uridylyl-removing enzyme from Sinorhizobium medicae (strain WSM419) (Ensifer medicae).